A 122-amino-acid polypeptide reads, in one-letter code: Large ribosomal subunit protein bL12 (122 aa).

Belongs to the bacterial ribosomal protein bL12 family. As to quaternary structure, homodimer. Part of the ribosomal stalk of the 50S ribosomal subunit. Forms a multimeric L10(L12)X complex, where L10 forms an elongated spine to which 2 to 4 L12 dimers bind in a sequential fashion. Binds GTP-bound translation factors.

Forms part of the ribosomal stalk which helps the ribosome interact with GTP-bound translation factors. Is thus essential for accurate translation. The sequence is that of Large ribosomal subunit protein bL12 from Fusobacterium nucleatum subsp. nucleatum (strain ATCC 25586 / DSM 15643 / BCRC 10681 / CIP 101130 / JCM 8532 / KCTC 2640 / LMG 13131 / VPI 4355).